The chain runs to 296 residues: GTPase Era (296 aa).

In terms of domain architecture, Era-type G spans 3–170 (KSGFVTIVGR…KELMFKYIPE (168 aa)). The tract at residues 11-18 (GRPNVGKS) is G1. 11–18 (GRPNVGKS) lines the GTP pocket. Positions 37–41 (QTTRN) are G2. Positions 58–61 (DTPG) are G3. Residues 58 to 62 (DTPGI) and 120 to 123 (NKID) each bind GTP. The interval 120–123 (NKID) is G4. A G5 region spans residues 149 to 151 (ISA). Residues 201–278 (LSEEVPHGIA…YIRLWVKVKE (78 aa)) enclose the KH type-2 domain.

Belongs to the TRAFAC class TrmE-Era-EngA-EngB-Septin-like GTPase superfamily. Era GTPase family. In terms of assembly, monomer.

It is found in the cytoplasm. Its subcellular location is the cell membrane. Its function is as follows. An essential GTPase that binds both GDP and GTP, with rapid nucleotide exchange. Plays a role in 16S rRNA processing and 30S ribosomal subunit biogenesis and possibly also in cell cycle regulation and energy metabolism. This chain is GTPase Era, found in Clostridium botulinum (strain Langeland / NCTC 10281 / Type F).